We begin with the raw amino-acid sequence, 676 residues long: MGASGILQLPRERFRKTSFFVWVIILFHKVFSIPLGVVHNNTLQVSDIDKFVCRDKLSSTSQLKSVGLNLEGNGVATDVPTATKRWGFRAGVPPKVVNYEAGEWAENCYNLAIKKVDGSECLPEAPEGVRDFPRCRYVHKVSGTGPCPGGLAFHKEGAFFLYDRLASTIIYRGTTFAEGVIAFLILPKARKDFFQSPPLHEPANMTTDPSSYYHTTTINYVVDNFGTNTTEFLFQVDHLTYVQLEARFTPQFLVLLNETIYSDNRRSNTTGKLIWKINPTVDTSMGEWAFWENKKNFTKTLSSEELSFVPVPETQNQVLDTTATVSPPISAHNHAGEDHKELVSEDSTPVVQMQNIKGKDTMPTTVTGVPTTTPSPFPINARNTDHTKSFIGLEGPQEDHSTTQPAKTTSQPTNSTESTTLNPTSEPSSRGTGPSSPTVPNTTESHAELGKTTPTTLPEQHTAASAIPRAVHPDELSGPGFLTNTIRGVTNLLTGSRRKRRDVTPNTQPKCNPNLHYWTALDEGAAIGLAWIPYFGPAAEGIYTEGIMENQNGLICGLRQLANETTQALQLFLRATTELRTFSILNRKAIDFLLQRWGGTCHILGPDCCIEPQDWTKNITDKIDQIIHDFVDNNLPNQNDGSNWWTGWKQWVPAGIGITGVIIAIIALLCICKFML.

The N-terminal stretch at 1–32 (MGASGILQLPRERFRKTSFFVWVIILFHKVFS) is a signal peptide. The Extracellular segment spans residues 33–650 (IPLGVVHNNT…GSNWWTGWKQ (618 aa)). N40 is a glycosylation site (N-linked (GlcNAc...) asparagine; by host). 5 cysteine pairs are disulfide-bonded: C53/C609, C108/C135, C121/C147, C511/C556, and C601/C608. Positions 54–201 (RDKLSSTSQL…DFFQSPPLHE (148 aa)) are receptor-binding. Residues N204, N228, N257, N268, and N296 are each glycosylated (N-linked (GlcNAc...) asparagine; by host). The interval 305–485 (ELSFVPVPET…LSGPGFLTNT (181 aa)) is mucin-like region. The disordered stretch occupies residues 356–463 (IKGKDTMPTT…PTTLPEQHTA (108 aa)). Over residues 361-374 (TMPTTVTGVPTTTP) the composition is skewed to low complexity. Residues 402-422 (TTQPAKTTSQPTNSTESTTLN) are compositionally biased toward polar residues. The N-linked (GlcNAc...) asparagine; by host glycan is linked to N414. Low complexity predominate over residues 423–440 (PTSEPSSRGTGPSSPTVP). A glycan (N-linked (GlcNAc...) asparagine; by host) is linked at N441. Over residues 452–463 (TTPTTLPEQHTA) the composition is skewed to polar residues. The tract at residues 524-539 (GAAIGLAWIPYFGPAA) is fusion peptide. The stretch at 554-595 (LICGLRQLANETTQALQLFLRATTELRTFSILNRKAIDFLLQ) forms a coiled coil. Residue N563 is glycosylated (N-linked (GlcNAc...) asparagine; by host). The stretch at 615-634 (WTKNITDKIDQIIHDFVDNN) forms a coiled coil. N618 carries N-linked (GlcNAc...) asparagine; by host glycosylation. A helical transmembrane segment spans residues 651-671 (WVPAGIGITGVIIAIIALLCI). 2 S-palmitoyl cysteine; by host lipidation sites follow: C670 and C672. At 672-676 (CKFML) the chain is on the cytoplasmic side.

It belongs to the filoviruses glycoprotein family. Homotrimer; each monomer consists of a GP1 and a GP2 subunit linked by disulfide bonds. The resulting peplomers (GP1,2) protrude from the virus surface as spikes. GP1 and GP2delta are part of GP1,2delta soluble complexes released by ectodomain shedding. GP1,2 interacts with host integrin ITGAV/alpha-V and CLEC10A. Also binds human CD209 and CLEC4M (collectively referred to as DC-SIGN(R)), as well as human FOLR1. Interacts with host entry receptor NPC1. In terms of processing, the signal peptide region modulates GP's high mannose glycosylation, thereby determining the efficiency of the interactions with DC-SIGN(R). N-glycosylated. Post-translationally, O-glycosylated in the mucin-like region. In terms of processing, palmitoylation of GP2 is not required for its function. Specific enzymatic cleavages in vivo yield mature proteins. The precursor is processed into GP1 and GP2 by host cell furin in the trans Golgi, and maybe by other host proteases, to yield the mature GP1 and GP2 proteins. The cleavage site corresponds to the furin optimal cleavage sequence [KR]-X-[KR]-R. This cleavage does not seem to be required for function. After the internalization of the virus into cell endosomes, GP1 C-terminus is removed by the endosomal proteases cathepsin B, cathepsin L, or both, leaving a 19-kDa N-terminal fragment which is further digested by cathepsin B. Proteolytic processing of GP1,2 by host ADAM17 can remove the transmembrane anchor of GP2 and leads to shedding of complexes consisting in GP1 and truncated GP2 (GP1,2delta).

Its subcellular location is the virion membrane. The protein resides in the host cell membrane. It localises to the secreted. GP1 is responsible for binding to the receptor(s) on target cells. Interacts with CD209/DC-SIGN and CLEC4M/DC-SIGNR which act as cofactors for virus entry into the host cell. Binding to CD209 and CLEC4M, which are respectively found on dendritic cells (DCs), and on endothelial cells of liver sinusoids and lymph node sinuses, facilitate infection of macrophages and endothelial cells. These interactions not only facilitate virus cell entry, but also allow capture of viral particles by DCs and subsequent transmission to susceptible cells without DCs infection (trans infection). Binding to the macrophage specific lectin CLEC10A also seems to enhance virus infectivity. Interaction with FOLR1/folate receptor alpha may be a cofactor for virus entry in some cell types, although results are contradictory. Members of the Tyro3 receptor tyrosine kinase family also seem to be cell entry factors in filovirus infection. Once attached, the virions are internalized through clathrin-dependent endocytosis and/or macropinocytosis. After internalization of the virus into the endosomes of the host cell, proteolysis of GP1 by two cysteine proteases, CTSB/cathepsin B and CTSL/cathepsin L presumably induces a conformational change of GP2, unmasking its fusion peptide and initiating membranes fusion. Functionally, GP2 acts as a class I viral fusion protein. Under the current model, the protein has at least 3 conformational states: pre-fusion native state, pre-hairpin intermediate state, and post-fusion hairpin state. During viral and target cell membrane fusion, the coiled coil regions (heptad repeats) assume a trimer-of-hairpins structure, positioning the fusion peptide in close proximity to the C-terminal region of the ectodomain. The formation of this structure appears to drive apposition and subsequent fusion of viral and target cell membranes. Responsible for penetration of the virus into the cell cytoplasm by mediating the fusion of the membrane of the endocytosed virus particle with the endosomal membrane. Low pH in endosomes induces an irreversible conformational change in GP2, releasing the fusion hydrophobic peptide. Its function is as follows. GP1,2 which is the disulfid-linked complex of GP1 and GP2, mediates endothelial cell activation and decreases endothelial barrier function. Mediates activation of primary macrophages. At terminal stages of the viral infection, when its expression is high, GP1,2 down-modulates the expression of various host cell surface molecules that are essential for immune surveillance and cell adhesion. Down-modulates integrins ITGA1, ITGA2, ITGA3, ITGA4, ITGA5, ITGA6, ITGAV and ITGB1. GP1,2 alters the cellular recycling of the dimer alpha-V/beta-3 via a dynamin-dependent pathway. Decrease in the host cell surface expression of various adhesion molecules may lead to cell detachment, contributing to the disruption of blood vessel integrity and hemorrhages developed during Ebola virus infection (cytotoxicity). This cytotoxicity appears late in the infection, only after the massive release of viral particles by infected cells. Down-modulation of host MHC-I, leading to altered recognition by immune cells, may explain the immune suppression and inflammatory dysfunction linked to Ebola infection. Also down-modulates EGFR surface expression. Counteracts the antiviral effect of host tetherin. In terms of biological role, GP2delta is part of the complex GP1,2delta released by host ADAM17 metalloprotease. This secreted complex may play a role in the pathogenesis of the virus by efficiently blocking the neutralizing antibodies that would otherwise neutralize the virus surface glycoproteins GP1,2. Might therefore contribute to the lack of inflammatory reaction seen during infection in spite the of extensive necrosis and massive virus production. GP1,2delta does not seem to be involved in activation of primary macrophages. The sequence is that of Envelope glycoprotein (GP) from Tai Forest ebolavirus (strain Cote d'Ivoire-94) (TAFV).